The chain runs to 469 residues: Deoxyribodipyrimidine photo-lyase (469 aa).

A Photolyase/cryptochrome alpha/beta domain is found at 1–133 (MRLVWFRRDL…IWSAFDDKCV (133 aa)). (6R)-5,10-methylene-5,6,7,8-tetrahydrofolate is bound at residue Glu107.

The protein belongs to the DNA photolyase class-1 family. Monomer. FAD serves as cofactor. Requires (6R)-5,10-methylene-5,6,7,8-tetrahydrofolate as cofactor.

The enzyme catalyses cyclobutadipyrimidine (in DNA) = 2 pyrimidine residues (in DNA).. Involved in repair of UV radiation-induced DNA damage. Catalyzes the light-dependent monomerization (300-600 nm) of cyclobutyl pyrimidine dimers (in cis-syn configuration), which are formed between adjacent bases on the same DNA strand upon exposure to ultraviolet radiation. The sequence is that of Deoxyribodipyrimidine photo-lyase (phrA) from Vibrio cholerae serotype O1 (strain ATCC 39315 / El Tor Inaba N16961).